A 340-amino-acid polypeptide reads, in one-letter code: PRKC apoptosis WT1 regulator protein (340 aa).

Polar residues predominate over residues 1-18 (MATGGYRTSSGLGGSTTD). Residues 1-253 (MATGGYRTSS…TDRSGFPRYN (253 aa)) form a disordered region. Residues 47–82 (SDAAGKPPAGALGTPAAAAANELNNNLPGGAPAAPA) are compositionally biased toward low complexity. Positions 68 to 72 (ELNNN) match the B30.2/SPRY domain-binding motif motif. Ser108 is modified (phosphoserine). Residues 145–161 (RKGKGQIEKRKLREKRR) carry the Nuclear localization signal motif. The selective for apoptosis induction in cancer cells (SAC) stretch occupies residues 145–203 (RKGKGQIEKRKLREKRRSTGVVNIPAAECLDEYEDDEAGQKERKREDAITQQNTIQNEA). Phosphothreonine; by PKA is present on Thr163. The segment covering 182 to 192 (AGQKERKREDA) has biased composition (basic and acidic residues). A coiled-coil region spans residues 186-206 (ERKREDAITQQNTIQNEAVNL). A compositionally biased stretch (polar residues) spans 193-203 (ITQQNTIQNEA). Ser231 carries the phosphoserine modification. Positions 242 to 253 (SRTDRSGFPRYN) are enriched in basic and acidic residues. The leucine-zipper stretch occupies residues 300 to 340 (IGKLKEEIDLLNRDLDDIEDENEQLKQENKTLLKVVGQLTR).

As to quaternary structure, homooligomer. Interacts (via the C-terminal region) with WT1. Interacts with THAP1. Interacts with AATF. Interacts with BACE1. Interacts with SPSB1 (via B30.2/SPRY domain); this interaction is direct and occurs in association with the Elongin BC complex. Interacts with SPSB2 (via B30.2/SPRY domain); this interaction occurs in association with the Elongin BC complex. Interacts with SPSB4 (via B30.2/SPRY domain); this interaction occurs in association with the Elongin BC complex. Component of a ternary complex composed of SQSTM1 and PRKCZ. Interacts with actin. Preferentially phosphorylated at the Thr-163 by PKC in cancer cells. In terms of tissue distribution, widely expressed. Expression is elevated in various neurodegenerative diseases such as amyotrophic lateral sclerosis, Alzheimer, Parkinson and Huntington diseases and stroke. Down-regulated in several cancers.

It is found in the cytoplasm. It localises to the nucleus. Functionally, pro-apoptotic protein capable of selectively inducing apoptosis in cancer cells, sensitizing the cells to diverse apoptotic stimuli and causing regression of tumors in animal models. Induces apoptosis in certain cancer cells by activation of the Fas prodeath pathway and coparallel inhibition of NF-kappa-B transcriptional activity. Inhibits the transcriptional activation and augments the transcriptional repression mediated by WT1. Down-regulates the anti-apoptotic protein BCL2 via its interaction with WT1. Also seems to be a transcriptional repressor by itself. May be directly involved in regulating the amyloid precursor protein (APP) cleavage activity of BACE1. This is PRKC apoptosis WT1 regulator protein (PAWR) from Homo sapiens (Human).